We begin with the raw amino-acid sequence, 853 residues long: Probable inorganic carbon transporter subunit DabA (853 aa).

Residues M1–S21 are disordered. Residues E7 to S21 show a composition bias toward polar residues. Positions 364, 366, 546, and 561 each coordinate Zn(2+).

It belongs to the inorganic carbon transporter (TC 9.A.2) DabA family. In terms of assembly, forms a complex with DabB. The cofactor is Zn(2+).

The protein resides in the cell inner membrane. Its function is as follows. Part of an energy-coupled inorganic carbon pump. This Methylovorus glucosotrophus (strain SIP3-4) protein is Probable inorganic carbon transporter subunit DabA.